Reading from the N-terminus, the 211-residue chain is FMN-dependent NADH:quinone oxidoreductase (211 aa).

Residue 17–19 participates in FMN binding; it reads SYS.

This sequence belongs to the azoreductase type 1 family. Homodimer. FMN serves as cofactor.

It carries out the reaction 2 a quinone + NADH + H(+) = 2 a 1,4-benzosemiquinone + NAD(+). The enzyme catalyses N,N-dimethyl-1,4-phenylenediamine + anthranilate + 2 NAD(+) = 2-(4-dimethylaminophenyl)diazenylbenzoate + 2 NADH + 2 H(+). In terms of biological role, quinone reductase that provides resistance to thiol-specific stress caused by electrophilic quinones. Also exhibits azoreductase activity. Catalyzes the reductive cleavage of the azo bond in aromatic azo compounds to the corresponding amines. This is FMN-dependent NADH:quinone oxidoreductase from Bacillus velezensis (strain DSM 23117 / BGSC 10A6 / LMG 26770 / FZB42) (Bacillus amyloliquefaciens subsp. plantarum).